Reading from the N-terminus, the 209-residue chain is MARYTGADCKRCRREKTKLFLKGSKCDTPKCPIEIRPYPPGEHGRGRTKDSEYLLQKREKQKCARIYGVLEKQFRGYYDEANRRAGKTGDELLKILESRLDNVVYRGGFAPSRDAARQAVRHGHVQVNGRKVDIPSYRISENDIVEIAPKARELTPFIVARETAGQGRAVPAWLEVIPSQLRILVHSLPARQVIDTQVQEQLIVELYSK.

In terms of domain architecture, S4 RNA-binding spans 98–164 (SRLDNVVYRG…TPFIVARETA (67 aa)).

Belongs to the universal ribosomal protein uS4 family. In terms of assembly, part of the 30S ribosomal subunit. Contacts protein S5. The interaction surface between S4 and S5 is involved in control of translational fidelity.

In terms of biological role, one of the primary rRNA binding proteins, it binds directly to 16S rRNA where it nucleates assembly of the body of the 30S subunit. Functionally, with S5 and S12 plays an important role in translational accuracy. This Frankia casuarinae (strain DSM 45818 / CECT 9043 / HFP020203 / CcI3) protein is Small ribosomal subunit protein uS4.